Reading from the N-terminus, the 638-residue chain is SUMO-activating enzyme subunit 2 (638 aa).

ATP is bound by residues Gly24–Gly29, Asp48, Asn56–Arg59, Lys72, Ser95–Ile96, and Asp117–Arg122. The Zn(2+) site is built by Cys158 and Cys161. A Glycyl lysine isopeptide (Lys-Gly) (interchain with G-Cter in SUMO1) cross-link involves residue Lys164. Cys173 acts as the Glycyl thioester intermediate in catalysis. Residue Lys190 forms a Glycyl lysine isopeptide (Lys-Gly) (interchain with G-Cter in SUMO) linkage. A disordered region spans residues Ala202–Gly233. Ser207 is modified (phosphoserine). A compositionally biased stretch (basic and acidic residues) spans Ala222–Gly233. Residue Lys236 forms a Glycyl lysine isopeptide (Lys-Gly) (interchain with G-Cter in SUMO1); alternate linkage. Glycyl lysine isopeptide (Lys-Gly) (interchain with G-Cter in SUMO2); alternate cross-links involve residues Lys236 and Lys257. Glycyl lysine isopeptide (Lys-Gly) (interchain with G-Cter in SUMO); alternate cross-links involve residues Lys257 and Lys271. The residue at position 271 (Lys271) is an N6-acetyllysine; alternate. A Glycyl lysine isopeptide (Lys-Gly) (interchain with G-Cter in SUMO) cross-link involves residue Lys275. Residue Lys369 forms a Glycyl lysine isopeptide (Lys-Gly) (interchain with G-Cter in SUMO2) linkage. A Glycyl lysine isopeptide (Lys-Gly) (interchain with G-Cter in SUMO1); alternate cross-link involves residue Lys418. Lys418 is covalently cross-linked (Glycyl lysine isopeptide (Lys-Gly) (interchain with G-Cter in SUMO2); alternate). The Zn(2+) site is built by Cys439 and Cys442. Residue Ser505 is modified to Phosphoserine. Lys538 is covalently cross-linked (Glycyl lysine isopeptide (Lys-Gly) (interchain with G-Cter in SUMO2)). Ser548 and Ser590 each carry phosphoserine. The segment covering Ser548–Ala561 has biased composition (basic and acidic residues). A disordered region spans residues Ser548–Asp638. The span at Glu581–Gly594 shows a compositional bias: acidic residues. Over residues Gly603–Glu614 the composition is skewed to basic and acidic residues. Lys609 participates in a covalent cross-link: Glycyl lysine isopeptide (Lys-Gly) (interchain with G-Cter in SUMO). Residue Lys611 forms a Glycyl lysine isopeptide (Lys-Gly) (interchain with G-Cter in SUMO); alternate linkage. Lys611 is subject to N6-acetyllysine; alternate. A Glycyl lysine isopeptide (Lys-Gly) (interchain with G-Cter in SUMO) cross-link involves residue Lys621. Positions Met628–Asp638 are enriched in acidic residues.

The protein belongs to the ubiquitin-activating E1 family. Heterodimer of SAE1 and UBA2/SAE2. The heterodimer corresponds to the two domains that are encoded on a single polypeptide chain in ubiquitin-activating enzyme E1. Interacts with UBE2I. Sumoylated with SUMO1 and SUMO2/3 and by UBC9. Sumoylation at Lys-236 inhibits enzymatic activity. Sumoylation at the C-terminal lysine cluster plays an essential role in nuclear trafficking. In terms of tissue distribution, broadly expressed, with highest levels in testis.

The protein resides in the cytoplasm. It localises to the nucleus. Its pathway is protein modification; protein sumoylation. In terms of biological role, the heterodimer acts as an E1 ligase for SUMO1, SUMO2, SUMO3, and probably SUMO4. It mediates ATP-dependent activation of SUMO proteins followed by formation of a thioester bond between a SUMO protein and a conserved active site cysteine residue on UBA2/SAE2. The chain is SUMO-activating enzyme subunit 2 (Uba2) from Mus musculus (Mouse).